The following is a 366-amino-acid chain: Septin-1 (366 aa).

The Septin-type G domain maps to 22 to 295 (KGFDFTLMVA…EGYRARCLQS (274 aa)). The tract at residues 32 to 39 (GESGLGKS) is G1 motif. GTP contacts are provided by residues 32–39 (GESGLGKS), Thr-66, Gly-92, and 171–179 (KADALMPRE). Residues 89 to 92 (DTPG) form a G3 motif region. A G4 motif region spans residues 170-173 (GKAD). Ser-206 bears the Phosphoserine mark. GTP-binding residues include Gly-229 and Arg-244. Phosphoserine is present on Ser-247. Phosphothreonine is present on Thr-250. Phosphoserine; by AURKB occurs at positions 306 and 314. Residues 347 to 366 (EKMQAQMQQSQAQGEQSDVL) are disordered. Residues 349–366 (MQAQMQQSQAQGEQSDVL) show a composition bias toward low complexity.

Belongs to the TRAFAC class TrmE-Era-EngA-EngB-Septin-like GTPase superfamily. Septin GTPase family. As to quaternary structure, septins polymerize into heterooligomeric protein complexes that form filaments, and can associate with cellular membranes, actin filaments and microtubules. GTPase activity is required for filament formation. Interacts with AURKB.

It localises to the cytoplasm. It is found in the cytoskeleton. The protein localises to the microtubule organizing center. The protein resides in the centrosome. Its subcellular location is the midbody. In terms of biological role, filament-forming cytoskeletal GTPase. May play a role in cytokinesis (Potential). The sequence is that of Septin-1 from Mus musculus (Mouse).